A 392-amino-acid chain; its full sequence is HORMA domain-containing protein 1 (392 aa).

Positions 25–227 (QQSLMFVKRL…TPFHTFRLKV (203 aa)) constitute an HORMA domain. 2 disordered regions span residues 271–292 (IKTK…EPNL) and 371–392 (LESS…NEHT). Residue S374 is modified to Phosphoserine. The Nuclear localization signal motif lies at 381 to 384 (KRRR).

Interacts with HORMAD2. Interacts with IHO1. In terms of processing, phosphorylated at Ser-375 in a SPO11-dependent manner.

It localises to the nucleus. The protein resides in the chromosome. Functionally, plays a key role in meiotic progression. Regulates 3 different functions during meiosis: ensures that sufficient numbers of processed DNA double-strand breaks (DSBs) are available for successful homology search by increasing the steady-state numbers of single-stranded DSB ends. Promotes synaptonemal-complex formation independently of its role in homology search. Plays a key role in the male mid-pachytene checkpoint and the female meiotic prophase checkpoint: required for efficient build-up of ATR activity on unsynapsed chromosome regions, a process believed to form the basis of meiotic silencing of unsynapsed chromatin (MSUC) and meiotic prophase quality control in both sexes. The protein is HORMA domain-containing protein 1 (Hormad1) of Rattus norvegicus (Rat).